The sequence spans 398 residues: Succinate--CoA ligase [ADP-forming] subunit beta (398 aa).

One can recognise an ATP-grasp domain in the interval 9–253; sequence MALLNERGVS…AGASDPLEQE (245 aa). Residues Lys-46, 53–55, Val-111, and Glu-116 each bind ATP; that span reads GRG. Residues Asn-208 and Asp-222 each contribute to the Mg(2+) site. Substrate contacts are provided by residues Asn-273 and 330–332; that span reads GIM.

Belongs to the succinate/malate CoA ligase beta subunit family. In terms of assembly, heterotetramer of two alpha and two beta subunits. Mg(2+) is required as a cofactor.

The enzyme catalyses succinate + ATP + CoA = succinyl-CoA + ADP + phosphate. It carries out the reaction GTP + succinate + CoA = succinyl-CoA + GDP + phosphate. The protein operates within carbohydrate metabolism; tricarboxylic acid cycle; succinate from succinyl-CoA (ligase route): step 1/1. In terms of biological role, succinyl-CoA synthetase functions in the citric acid cycle (TCA), coupling the hydrolysis of succinyl-CoA to the synthesis of either ATP or GTP and thus represents the only step of substrate-level phosphorylation in the TCA. The beta subunit provides nucleotide specificity of the enzyme and binds the substrate succinate, while the binding sites for coenzyme A and phosphate are found in the alpha subunit. The sequence is that of Succinate--CoA ligase [ADP-forming] subunit beta from Zymomonas mobilis subsp. mobilis (strain ATCC 31821 / ZM4 / CP4).